The following is a 485-amino-acid chain: MGQLISFFGEIPTILQEALNIALIAVSIIATIKGVVNVWKSGLIQLLMFVMLAGRSCSVQIGHHLELEHIILNSSSILPFTPTLCKLNKTYFLVRGPFQAHWGVDLAIGSTTVAVENATKTYTLKSKNFTGCFEGNPDPDSAALLVTWLFNSLHHDYKNDPSILCERVSGENSFRFQINISEPEYCEKILSRMANLFGSFENYCLNNRHIKKLIIIRNLTWSQQCHENHMSAMQLITSNIHTQVVRARRILSFFTWSLSDAVGNDMPGGYCLEKWMLIASQLKCFGNTAVAKCNLNHDSEFCDMLRLFDFNRKAIETLQNKTRSQLNIAINAINSLISDNLLMKNRVKELMDIPFCNYTKFWYVNHTKLNHHSLPRCWLVKNGSYLNESEFRNDWLLESDHLISEILSREYEERQGRTPLSLVDVCFWSTLFYTASIFLHLIRIPTHRHIVGEGCPKPHRLRADSTCACGLYKQKRRPLKWVRSN.

A lipid anchor (N-myristoyl glycine; by host) is attached at G2. At 2-17 the chain is on the extracellular side; that stretch reads GQLISFFGEIPTILQE. Residues 18 to 33 form a helical membrane-spanning segment; sequence ALNIALIAVSIIATIK. Residues 34-58 are Cytoplasmic-facing; that stretch reads GVVNVWKSGLIQLLMFVMLAGRSCS. Zn(2+) is bound at residue C57. The Extracellular portion of the chain corresponds to 59-424; sequence VQIGHHLELE…QGRTPLSLVD (366 aa). Cystine bridges form between C85–C225, C271–C284, C293–C302, and C356–C377. N88, N128, N179, and N218 each carry an N-linked (GlcNAc...) asparagine; by host glycan. Residues N357, N365, N382, and N387 are each glycosylated (N-linked (GlcNAc...) asparagine; by host). A helical membrane pass occupies residues 425–445; that stretch reads VCFWSTLFYTASIFLHLIRIP. The Cytoplasmic segment spans residues 446 to 485; it reads THRHIVGEGCPKPHRLRADSTCACGLYKQKRRPLKWVRSN. 6 residues coordinate Zn(2+): H447, H449, C455, H459, C467, and C469.

This sequence belongs to the arenaviridae GPC protein family. As to quaternary structure, interacts with glycoprotein G2. Part of the GP complex (GP-C) together with glycoprotein G1 and glycoprotein G2. The GP-complex interacts with protein Z, which interacts with ribonucleocapsid; these interactions may induce virion budding. In terms of assembly, homotrimer; disulfide-linked. In pre-fusion state, G1 homotrimers bind G2 homotrimers via ionic interactions. Part of the GP complex (GP-C) together with glycoprotein G2 and the stable signal peptide. The GP-complex interacts with protein Z, which interacts with ribonucleocapsid; these interactions may induce virion budding. Homotrimer. Interacts with the stable signal peptide. In pre-fusion state, G2 homotrimers bind G1 homotrimers via ionic interactions. Part of the GP complex (GP-C) together with glycoprotein G1 and the stable signal peptide. Acidification in the endosome triggers rearrangements, which ultimately leads to a 6 helix bundle formed by the two heptad repeat domains (HR1 and HR2) in post-fusion state. The GP-complex interacts with protein Z, which interacts with ribonucleocapsid; these interactions may induce virion budding. In terms of processing, specific enzymatic cleavages in vivo yield mature proteins. GP-C polyprotein is cleaved in the endoplasmic reticulum by the host protease MBTPS1. Only cleaved glycoprotein is incorporated into virions. The SSP remains stably associated with the GP complex following cleavage by signal peptidase and plays crucial roles in the trafficking of GP through the secretory pathway. Post-translationally, myristoylation is necessary for GP2-mediated fusion activity.

The protein resides in the virion membrane. It localises to the host endoplasmic reticulum membrane. Its subcellular location is the host Golgi apparatus membrane. The protein localises to the host cell membrane. Its function is as follows. Functions as a cleaved signal peptide that is retained as the third component of the GP complex (GP-C). Helps to stabilize the spike complex in its native conformation. The SSP is required for efficient glycoprotein expression, post-translational maturation cleavage of G1 and G2, glycoprotein transport to the cell surface plasma membrane, formation of infectious virus particles, and acid pH-dependent glycoprotein-mediated cell fusion. Functionally, forms the virion spikes together with glycoprotein G2. The glycoprotein spike trimers are connected to the underlying matrix. Interacts with the host receptor leading to virus endocytosis. In terms of biological role, forms the virion spikes together with glycoprotein G1. The glycoprotein spike trimers are connected to the underlying matrix. Class I viral fusion protein that directs fusion of viral and host endosomal membranes, leading to delivery of the nucleocapsid into the cytoplasm. Membrane fusion is mediated by irreversible conformational changes induced by acidification. The chain is Pre-glycoprotein polyprotein GP complex from Sigmodon hispidus (Hispid cotton rat).